The chain runs to 712 residues: Transcriptional regulator GZF3 (712 aa).

A compositionally biased stretch (polar residues) spans 1–13 (MSMSDIQQRPQIP). Disordered regions lie at residues 1–20 (MSMSDIQQRPQIPTTTTAAV), 27–135 (NVNT…GPVC), 173–280 (SLKT…HHHL), 377–533 (DVSS…GNNF), and 596–712 (LNNN…KVKI). 2 stretches are compositionally biased toward low complexity: residues 27-84 (NVNT…EQSS) and 107-131 (PKTGTTSSSSSTTTSSATSSKISMS). The GATA-type zinc finger occupies 135-159 (CGNCQTQTTPLWRRDETGQVLCNAC). The span at 186–199 (KQNGSNSQSSKSSG) shows a compositional bias: low complexity. Residues 213-223 (GKKSPKSKKKS) are compositionally biased toward basic residues. Polar residues predominate over residues 246–261 (ATSNNTPTFKSTTSQS). Residues 268–280 (NHHHQHHNHHHHL) show a composition bias toward basic residues. The span at 379–414 (SSINGSSTSLSSSSASSSIFSSVAPSTSSSSSLSNG) shows a compositional bias: low complexity. Composition is skewed to polar residues over residues 429 to 447 (SKISSPSSQPFTRSTTPLQ) and 484 to 498 (QQSMANYSQTNRSPI). 2 stretches are compositionally biased toward low complexity: residues 499–532 (NGNQDNNNNNNNNNNNNNNGNNNGNNNSNNNGNN) and 596–616 (LNNNGGMSSQTQPQPSQQPQQ). Residues 545–598 (TRISELELVNDLYRTRIMELEAMEQAARLRENSMKKRLDEVMNLQINYQNLLNN) adopt a coiled-coil conformation. Over residues 631-667 (DQGSQSISPNVSITGSTTITSPNSRSKIISETTPTHH) the composition is skewed to polar residues.

Its subcellular location is the nucleus. Probable transcription factor involved in response to fluconazole, LiCl, and copper. The protein is Transcriptional regulator GZF3 (GZF3) of Candida albicans (strain SC5314 / ATCC MYA-2876) (Yeast).